The primary structure comprises 252 residues: Aspartate/glutamate leucyltransferase (252 aa).

Belongs to the R-transferase family. Bpt subfamily.

Its subcellular location is the cytoplasm. The enzyme catalyses N-terminal L-glutamyl-[protein] + L-leucyl-tRNA(Leu) = N-terminal L-leucyl-L-glutamyl-[protein] + tRNA(Leu) + H(+). It catalyses the reaction N-terminal L-aspartyl-[protein] + L-leucyl-tRNA(Leu) = N-terminal L-leucyl-L-aspartyl-[protein] + tRNA(Leu) + H(+). Functionally, functions in the N-end rule pathway of protein degradation where it conjugates Leu from its aminoacyl-tRNA to the N-termini of proteins containing an N-terminal aspartate or glutamate. The chain is Aspartate/glutamate leucyltransferase from Hyphomonas neptunium (strain ATCC 15444).